A 377-amino-acid chain; its full sequence is O-phospho-L-seryl-tRNA:Cys-tRNA synthase (377 aa).

Residues 83–84 (AR), Asn-188, and 211–213 (SGH) contribute to the pyridoxal 5'-phosphate site. The residue at position 214 (Lys-214) is an N6-(pyridoxal phosphate)lysine.

It belongs to the SepCysS family. In terms of assembly, homodimer. Interacts with SepRS. Pyridoxal 5'-phosphate serves as cofactor.

It catalyses the reaction O-phospho-L-seryl-tRNA(Cys) + hydrogen sulfide + H(+) = L-cysteinyl-tRNA(Cys) + phosphate. Converts O-phospho-L-seryl-tRNA(Cys) (Sep-tRNA(Cys)) to L-cysteinyl-tRNA(Cys) (Cys-tRNA(Cys)). The polypeptide is O-phospho-L-seryl-tRNA:Cys-tRNA synthase (Methanothermobacter thermautotrophicus (strain ATCC 29096 / DSM 1053 / JCM 10044 / NBRC 100330 / Delta H) (Methanobacterium thermoautotrophicum)).